A 376-amino-acid polypeptide reads, in one-letter code: Fibromodulin (376 aa).

Residues Met-1–Gly-18 form the signal peptide. Gln-19 is modified (pyrrolidone carboxylic acid). A sulfotyrosine mark is found at Tyr-20, Tyr-38, Tyr-53, Tyr-55, Tyr-63, and Tyr-65. One can recognise an LRRNT domain in the interval Ala-67–Ser-105. LRR repeat units follow at residues Arg-106–Asn-127, Gly-130–Phe-151, His-156–Arg-176, Ser-177–Gly-198, Asn-201–Leu-222, Ser-224–Ala-245, Leu-246–Gly-266, and Lys-269–Thr-289. Asn-127 carries N-linked (GlcNAc...) (keratan sulfate) asparagine glycosylation. Asn-166 is a glycosylation site (N-linked (GlcNAc...) (keratan sulfate) asparagine). Asn-201 carries N-linked (GlcNAc...) (keratan sulfate) asparagine glycosylation. A glycan (N-linked (GlcNAc...) (keratan sulfate) asparagine) is linked at Asn-291. LRR repeat units lie at residues Ser-294–Leu-315 and Glu-316–Thr-335. A disulfide bond links Cys-334 and Cys-367. Asn-341 carries N-linked (GlcNAc...) asparagine glycosylation. One copy of the LRR 11 repeat lies at Lys-344–Cys-367.

This sequence belongs to the small leucine-rich proteoglycan (SLRP) family. SLRP class II subfamily. In terms of assembly, binds to type I and type II collagen. Post-translationally, binds keratan sulfate chains. In terms of processing, sulfated on tyrosine residue(s). Highest levels observed in knee epiphysis, in calvarial and diaphyseal bone, in nasal and costal cartilage, in the eye, and in bladder. In mature knee joint it is mostly present in the proliferating zone of growth plate. It is also observed in ligaments, especially at insertion sites, in the junction between meniscus and joint capsule, in the perimysium of skeletal muscle and in the periosteum.

The protein resides in the secreted. It localises to the extracellular space. Its subcellular location is the extracellular matrix. Functionally, affects the rate of fibrils formation. May have a primary role in collagen fibrillogenesis. In Mus musculus (Mouse), this protein is Fibromodulin (Fmod).